A 735-amino-acid polypeptide reads, in one-letter code: 2-5A-dependent ribonuclease (735 aa).

The interval 1 to 21 (METPDYNTPQGGTPSAGSQRT) is disordered. 9 ANK repeats span residues 24–53 (EDDS…DANA), 58–87 (WGWT…DPHR), 91–120 (NGAT…DVNE), 124–153 (NGFT…NVNL), 167–197 (GGAT…EVDA), 201–234 (MGRN…DVNV), 238–268 (RGKT…NIDA), 272–301 (EGKT…DKCD), and 303–328 (LVWI…NPDT). The binding to TMEV Leader protein stretch occupies residues 26 to 51 (DSSLIKAVQKGDVVRVQQLLEKGADA). 2 2-5A binding (P-loop) regions span residues 229–242 (GADV…GKTP) and 253–275 (GLVQ…EGKT). Residues 364 to 584 (IHDDYKIAGT…LVDLLGHPFF (221 aa)) enclose the Protein kinase domain. A C6-type zinc finger spans residues 401-436 (CKEVSCLRDCGDHSNLVAFYGREDDKGCLYVCVSLC). One can recognise a KEN domain in the interval 587-722 (WENRYRTLRN…KHFPQPPPRL (136 aa)). The interval 714–735 (HFPQPPPRLSVPEAVGPGGIQS) is disordered.

Belongs to the protein kinase superfamily. (Microbial infection) Interacts (via N-terminus) with TMEV leader protein; this interaction prevents RNASEL activation by its substrate 2'-5' oligoadenylates. In terms of assembly, monomer (inactive form) or homodimer. Interacts with ABCE1; this interaction inhibits the RNASEL. Mn(2+) is required as a cofactor. Mg(2+) serves as cofactor. Expressed in spleen, thymus, lung, testis, kidney, liver and heart.

It is found in the cytoplasm. The protein resides in the mitochondrion. With respect to regulation, after binding to 2-5A (5'-phosphorylated 2',5'-linked oligoadenylates) the homodimerization and subsequent activation occurs. Inhibited by RNASEL inhibitor ABCE1/RLI, a cytoplasmic member of the ATP-binding cassette (ABC) transporter family. Functionally, endoribonuclease that functions in the interferon (IFN) antiviral response. In INF treated and virus infected cells, RNASEL probably mediates its antiviral effects through a combination of direct cleavage of single-stranded viral RNAs, inhibition of protein synthesis through the degradation of rRNA, induction of apoptosis, and induction of other antiviral genes. RNASEL mediated apoptosis is the result of a JNK-dependent stress-response pathway leading to cytochrome c release from mitochondria and caspase-dependent apoptosis. Therefore, activation of RNASEL could lead to elimination of virus infected cells under some circumstances. In the crosstalk between autophagy and apoptosis proposed to induce autophagy as an early stress response to small double-stranded RNA and at later stages of prolonged stress to activate caspase-dependent proteolytic cleavage of BECN1 to terminate autophagy and promote apoptosis. Might play a central role in the regulation of mRNA turnover. Cleaves 3' of UpNp dimers, with preference for UU and UA sequences, to sets of discrete products ranging from between 4 and 22 nucleotides in length. The chain is 2-5A-dependent ribonuclease (Rnasel) from Mus musculus (Mouse).